An 85-amino-acid polypeptide reads, in one-letter code: MASTGEIWLQWFSCCFQQQRSPSRRPHQRLRIDRSMIGNPTNFVHTGHIGSADVELSANRLNAISTQMQSKGGYETNSIHSLHAC.

S-palmitoyl cysteine attachment occurs at residues C14 and C15. The CRIB domain occupies I37–G50. S78 and S81 each carry phosphoserine.

The protein belongs to the CDC42SE/SPEC family.

It localises to the cytoplasm. The protein resides in the cytoskeleton. Its subcellular location is the cell membrane. In terms of biological role, probably involved in the organization of the actin cytoskeleton by acting downstream of CDC42, inducing actin filament assembly. This chain is CDC42 small effector protein homolog (Spec2), found in Drosophila melanogaster (Fruit fly).